A 129-amino-acid polypeptide reads, in one-letter code: MRHRKIGRRFNKSATHVKAMLKNMVCSLFRYEMIKTTVSKAKELRRVAEPLITCAKIDSVANRRLVFSRIRDNKIVFKLFRDLGPHFLGQFGGYTRILRCGFRSGDQAPMAYIQLINRVKNKKELVYKK.

It belongs to the bacterial ribosomal protein bL17 family. In terms of assembly, part of the 50S ribosomal subunit. Contacts protein L32.

This Buchnera aphidicola subsp. Baizongia pistaciae (strain Bp) protein is Large ribosomal subunit protein bL17.